A 107-amino-acid chain; its full sequence is Putative nucleosome assembly protein 1-like 6 (107 aa).

This sequence belongs to the nucleosome assembly protein (NAP) family.

The chain is Putative nucleosome assembly protein 1-like 6 from Homo sapiens (Human).